A 192-amino-acid chain; its full sequence is Large ribosomal subunit protein uL5 (192 aa).

This sequence belongs to the universal ribosomal protein uL5 family. In terms of assembly, part of the 50S ribosomal subunit; contacts the 5S rRNA and probably tRNA. Forms a bridge to the 30S subunit in the 70S ribosome.

Functionally, this is one of the proteins that bind and probably mediate the attachment of the 5S RNA into the large ribosomal subunit, where it forms part of the central protuberance. In the 70S ribosome it contacts protein S13 of the 30S subunit (bridge B1b), connecting the 2 subunits; this bridge is implicated in subunit movement. May contact the P site tRNA; the 5S rRNA and some of its associated proteins might help stabilize positioning of ribosome-bound tRNAs. This chain is Large ribosomal subunit protein uL5, found in Aeropyrum pernix (strain ATCC 700893 / DSM 11879 / JCM 9820 / NBRC 100138 / K1).